We begin with the raw amino-acid sequence, 251 residues long: Phosphate import ATP-binding protein PstB (251 aa).

The ABC transporter domain occupies 5–246; that stretch reads MNSKDVNFWY…PENKKTEDYI (242 aa). An ATP-binding site is contributed by 37-44; the sequence is GPSGCGKS.

It belongs to the ABC transporter superfamily. Phosphate importer (TC 3.A.1.7) family. In terms of assembly, the complex is composed of two ATP-binding proteins (PstB), two transmembrane proteins (PstC and PstA) and a solute-binding protein (PstS).

The protein localises to the cell membrane. It carries out the reaction phosphate(out) + ATP + H2O = ADP + 2 phosphate(in) + H(+). In terms of biological role, part of the ABC transporter complex PstSACB involved in phosphate import. Responsible for energy coupling to the transport system. The chain is Phosphate import ATP-binding protein PstB from Methanococcus maripaludis (strain DSM 14266 / JCM 13030 / NBRC 101832 / S2 / LL).